Reading from the N-terminus, the 374-residue chain is Glutamate 5-kinase (374 aa).

K17 serves as a coordination point for ATP. Substrate-binding residues include S57, D144, and N156. Residues 176 to 177 and 218 to 224 each bind ATP; these read SD and TGGMVTK. In terms of domain architecture, PUA spans 280–358; that stretch reads QGALVLDDGA…RELARELGPA (79 aa).

It belongs to the glutamate 5-kinase family.

Its subcellular location is the cytoplasm. It carries out the reaction L-glutamate + ATP = L-glutamyl 5-phosphate + ADP. Its pathway is amino-acid biosynthesis; L-proline biosynthesis; L-glutamate 5-semialdehyde from L-glutamate: step 1/2. In terms of biological role, catalyzes the transfer of a phosphate group to glutamate to form L-glutamate 5-phosphate. The chain is Glutamate 5-kinase from Streptomyces coelicolor (strain ATCC BAA-471 / A3(2) / M145).